Consider the following 29-residue polypeptide: Cytochrome b6-f complex subunit 8 (29 aa).

The chain crosses the membrane as a helical span at residues 3–23; that stretch reads IVGIAWAALMVVFTFSLSLVV.

It belongs to the PetN family. The 4 large subunits of the cytochrome b6-f complex are cytochrome b6, subunit IV (17 kDa polypeptide, PetD), cytochrome f and the Rieske protein, while the 4 small subunits are PetG, PetL, PetM and PetN. The complex functions as a dimer.

The protein resides in the plastid. It localises to the chloroplast thylakoid membrane. Functionally, component of the cytochrome b6-f complex, which mediates electron transfer between photosystem II (PSII) and photosystem I (PSI), cyclic electron flow around PSI, and state transitions. In Cryptomeria japonica (Japanese cedar), this protein is Cytochrome b6-f complex subunit 8.